The chain runs to 324 residues: MNGVLYITFTVILSVEVIIGNFGNGIIALVNIMDLAKRRKISSVDQILTALAISRIVLLWLVLVSWWLSMFYPGQWMTEGIDVIVHNVWTTLNQISLWLATSFSVFCFLKVANFSNTIFFYLKIRVKKVMTGTLIMFLLLLGLNIIVINASKTILIPEYKVNMSNSLNLKNTQISMLFPFANTLFGFIPFAVSLVTFLLLFFSLWKHQRKMHHGAQGCRDSSTKAHIRVLQTLIASILLYFVFFLSLVVKVWISLFLERMLLLLITQAAKIAFPSLHPWVLILGNAKLRKASLSALQWLRCRHKDEHRRVQRPEVHSCGSSCMP.

Residues 1–2 (MN) lie on the Extracellular side of the membrane. The helical transmembrane segment at 3–23 (GVLYITFTVILSVEVIIGNFG) threads the bilayer. Residues 24–55 (NGIIALVNIMDLAKRRKISSVDQILTALAISR) lie on the Cytoplasmic side of the membrane. A helical membrane pass occupies residues 56-76 (IVLLWLVLVSWWLSMFYPGQW). Topologically, residues 77-94 (MTEGIDVIVHNVWTTLNQ) are extracellular. The chain crosses the membrane as a helical span at residues 95-115 (ISLWLATSFSVFCFLKVANFS). Residues 116–128 (NTIFFYLKIRVKK) are Cytoplasmic-facing. A helical membrane pass occupies residues 129 to 149 (VMTGTLIMFLLLLGLNIIVIN). Residues 150 to 183 (ASKTILIPEYKVNMSNSLNLKNTQISMLFPFANT) are Extracellular-facing. A glycan (N-linked (GlcNAc...) asparagine) is linked at Asn162. The helical transmembrane segment at 184-204 (LFGFIPFAVSLVTFLLLFFSL) threads the bilayer. Topologically, residues 205-236 (WKHQRKMHHGAQGCRDSSTKAHIRVLQTLIAS) are cytoplasmic. A helical membrane pass occupies residues 237-257 (ILLYFVFFLSLVVKVWISLFL). Residues 258 to 261 (ERML) lie on the Extracellular side of the membrane. A helical transmembrane segment spans residues 262–282 (LLLITQAAKIAFPSLHPWVLI). The Cytoplasmic segment spans residues 283-324 (LGNAKLRKASLSALQWLRCRHKDEHRRVQRPEVHSCGSSCMP).

It belongs to the G-protein coupled receptor T2R family.

The protein resides in the membrane. In terms of biological role, putative taste receptor which may play a role in the perception of bitterness. The protein is Taste receptor type 2 member 116 of Rattus norvegicus (Rat).